The sequence spans 212 residues: Ribonuclease P protein component 3 (212 aa).

Belongs to the eukaryotic/archaeal RNase P protein component 3 family. As to quaternary structure, consists of a catalytic RNA component and at least 5 protein subunits. Forms a heterotetrameric subcomplex with Rnp2. Reconstituted enzyme missing individual protein subunits is suboptimally active, showing each subunit contributes to optimization of activity.

The protein resides in the cytoplasm. It carries out the reaction Endonucleolytic cleavage of RNA, removing 5'-extranucleotides from tRNA precursor.. Part of ribonuclease P, a protein complex that generates mature tRNA molecules by cleaving their 5'-ends. Not absolutely essential for activity in vitro, however it strongly stimulates activity. Binds RNase P RNA. The polypeptide is Ribonuclease P protein component 3 (Pyrococcus horikoshii (strain ATCC 700860 / DSM 12428 / JCM 9974 / NBRC 100139 / OT-3)).